We begin with the raw amino-acid sequence, 373 residues long: MQRDGTNEQCFLELASPMSFILNILRNMLAYFGVPVDQDLLIFQNKDYGSARSIVRVIGRMLPLEPCRRPRFELTPPANAKEVDDYELAVPSFADVLCVADDGEAGCLRFRHSLWKKAEGKAALFHPSKLPWDLSSPALSQNRTVADDLPVSEAAIKKIAALEDELTSLRAQIAAIVAMQDLGGGGETGFISLSDGPSMEQVPPSSATARLSVEPDHVPSVVLSPPPLPPPPPPLPPPQFSLQPPSSLPVPPGSANTRGIDNLAAEMKKRPSGVKKTDGSHHSESQRVSDVPNMLDVLKDMNKVKLRPVERSPGGRPIQKRRRQSSQWDPVSLISNALKQKFAFQDDSFDSENRSWQGSPFSSPETSRNGSRF.

At Ser-136 the chain carries Phosphoserine. The stretch at Val-151 to Met-179 forms a coiled coil. Disordered regions lie at residues Gly-189–Val-331 and Asp-346–Phe-373. The segment covering Ser-224–Gln-239 has biased composition (pro residues). Composition is skewed to basic and acidic residues over residues Lys-275 to Arg-287 and Val-297 to Glu-310. 2 positions are modified to phosphoserine: Ser-312 and Ser-348. Residues Arg-354–Phe-373 show a composition bias toward polar residues.

This sequence belongs to the MTFR1 family.

Its subcellular location is the mitochondrion. In terms of biological role, may play a role in mitochondrial aerobic respiration essentially in the testis. Can also promote mitochondrial fission. In Rattus norvegicus (Rat), this protein is Mitochondrial fission regulator 2 (Mtfr2).